Here is a 214-residue protein sequence, read N- to C-terminus: Probable transaldolase (214 aa).

Lys-83 serves as the catalytic Schiff-base intermediate with substrate.

The protein belongs to the transaldolase family. Type 3B subfamily.

It is found in the cytoplasm. The enzyme catalyses D-sedoheptulose 7-phosphate + D-glyceraldehyde 3-phosphate = D-erythrose 4-phosphate + beta-D-fructose 6-phosphate. It participates in carbohydrate degradation; pentose phosphate pathway; D-glyceraldehyde 3-phosphate and beta-D-fructose 6-phosphate from D-ribose 5-phosphate and D-xylulose 5-phosphate (non-oxidative stage): step 2/3. Functionally, transaldolase is important for the balance of metabolites in the pentose-phosphate pathway. This is Probable transaldolase from Streptococcus equi subsp. equi (strain 4047).